Reading from the N-terminus, the 317-residue chain is Sulfate adenylyltransferase subunit 2 (317 aa).

Disordered stretches follow at residues 1 to 21 (MPDS…APLD) and 298 to 317 (RAID…EGYF).

It belongs to the PAPS reductase family. CysD subfamily. As to quaternary structure, heterodimer composed of CysD, the smaller subunit, and CysN.

It carries out the reaction sulfate + ATP + H(+) = adenosine 5'-phosphosulfate + diphosphate. It participates in sulfur metabolism; hydrogen sulfide biosynthesis; sulfite from sulfate: step 1/3. Its function is as follows. With CysN forms the ATP sulfurylase (ATPS) that catalyzes the adenylation of sulfate producing adenosine 5'-phosphosulfate (APS) and diphosphate, the first enzymatic step in sulfur assimilation pathway. APS synthesis involves the formation of a high-energy phosphoric-sulfuric acid anhydride bond driven by GTP hydrolysis by CysN coupled to ATP hydrolysis by CysD. The protein is Sulfate adenylyltransferase subunit 2 of Rhizobium etli (strain ATCC 51251 / DSM 11541 / JCM 21823 / NBRC 15573 / CFN 42).